A 233-amino-acid chain; its full sequence is Small ribosomal subunit protein uS3 (233 aa).

The 70-residue stretch at 39–108 (IRTALFKLLK…KLIVNVRVIE (70 aa)) folds into the KH type-2 domain.

The protein belongs to the universal ribosomal protein uS3 family. As to quaternary structure, part of the 30S ribosomal subunit. Forms a tight complex with proteins S10 and S14.

Binds the lower part of the 30S subunit head. Binds mRNA in the 70S ribosome, positioning it for translation. The chain is Small ribosomal subunit protein uS3 from Mycoplasma mycoides subsp. mycoides SC (strain CCUG 32753 / NCTC 10114 / PG1).